Consider the following 125-residue polypeptide: MPRYELALILKAMRRPETAAALKRTIESLMDRGAIVRNLESLGERALPYRISSHSQQHSRGGYFLVDFYAPTSAVENILEHLARDIDVVRPNIVKHPLTQEVKECDGIVPVPLEEKLYSTKRRKK.

Belongs to the bacterial ribosomal protein bS6 family. As to quaternary structure, component of the mitochondrial ribosome small subunit (28S) which comprises a 12S rRNA and about 30 distinct proteins.

It is found in the mitochondrion. The chain is Small ribosomal subunit protein bS6m (Mrps6) from Mus musculus (Mouse).